The chain runs to 207 residues: Twist-related protein 1 (207 aa).

Low complexity predominate over residues 1-18 (MMQDVSSSPVSPADDSLS). A disordered region spans residues 1-110 (MMQDVSSSPV…GGGSPQSYEE (110 aa)). Positions 34 to 43 (RGGRKRRSSR) are enriched in basic residues. 2 stretches are compositionally biased toward gly residues: residues 46-65 (AGGG…GGDE) and 80-104 (GCGG…GGGS). The 52-residue stretch at 113–164 (TQRVMANVRERQRTQSLNEAFAALRKIIPTLPSDKLSKIQTLKLAARYIDFL) folds into the bHLH domain. A sufficient for transactivation activity region spans residues 166-196 (QVLQSDELDSKMASCSYVAHERLSYAFSVWR).

Efficient DNA binding requires dimerization with another bHLH protein. Homodimer or heterodimer with E proteins such as TCF3. ID1 binds preferentially to TCF3 but does not interact efficiently with TWIST1 so ID1 levels control the amount of TCF3 available to dimerize with TWIST and thus determine the type of dimer formed.

The protein resides in the nucleus. In terms of biological role, acts as a transcriptional regulator. Inhibits myogenesis by sequestrating E proteins, inhibiting trans-activation by MEF2, and inhibiting DNA-binding by MYOD1 through physical interaction. This interaction probably involves the basic domains of both proteins. Also represses expression of pro-inflammatory cytokines such as TNFA and IL1B. Regulates cranial suture patterning and fusion. Activates transcription as a heterodimer with E proteins. Regulates gene expression differentially, depending on dimer composition. Homodimers induce expression of FGFR2 and POSTN while heterodimers repress FGFR2 and POSTN expression and induce THBS1 expression. Heterodimerization is also required for osteoblast differentiation. Represses the activity of the circadian transcriptional activator: NPAS2-BMAL1 heterodimer. The protein is Twist-related protein 1 (TWIST1) of Cebus capucinus (White-faced sapajou).